The sequence spans 500 residues: E3 ubiquitin-protein ligase TRIM69 (500 aa).

The disordered stretch occupies residues 1–22 (MEVSSRPPSNFDPGNYVEMSDP). The segment at 1–153 (MEVSSRPPSN…SMGQSKDFLQ (153 aa)) is necessary for nuclear localization. Residues 42–83 (CPLCNDWFRDPLMLTCGHNFCQDCIQSFWKVHSKETFCPDCK) form an RING-type zinc finger. Residues 217 to 256 (NKEKDILNDLRDEGKLLNEEMEVNLNQIQEQCLVAKDMLA) adopt a coiled-coil conformation. Residues 306–500 (PIQYIIWKEM…KEPLHIVHPQ (195 aa)) form the B30.2/SPRY domain. Phosphoserine is present on Ser-342.

It belongs to the TRIM/RBCC family. As to quaternary structure, homo-multimer; required for antiviral activity. Interacts with PML. Phosphorylated. Phosphorylation is necessary for nuclear localization. As to expression, expressed in spermatid.

The protein localises to the cytoplasm. It localises to the nucleus. The protein resides in the nucleus speckle. It is found in the cytoskeleton. Its subcellular location is the microtubule organizing center. The protein localises to the centrosome. The enzyme catalyses S-ubiquitinyl-[E2 ubiquitin-conjugating enzyme]-L-cysteine + [acceptor protein]-L-lysine = [E2 ubiquitin-conjugating enzyme]-L-cysteine + N(6)-ubiquitinyl-[acceptor protein]-L-lysine.. The protein operates within protein modification; protein ubiquitination. Functionally, E3 ubiquitin ligase that plays an important role in antiviral immunity by restricting different viral infections including dengue virus or vesicular stomatitis indiana virus. Ubiquitinates viral proteins such as dengue virus NS3 thereby limiting infection. In addition, acts as a key mediator of type I interferon induced microtubule stabilization by directly associating to microtubules independently of its E3 ligase activity. Also plays a role in cataract formation together with TP53. Mechanistically, inhibits UVB-induced cell apoptosis and reactive oxygen species (ROS) production by inducing TP53 ubiquitination. Regulates centrosome dynamics and mitotic progression by ubiquitinating STK3/MST2; leading to its redistribution to the perinuclear cytoskeleton and subsequent phosphorylation by PLK1. The protein is E3 ubiquitin-protein ligase TRIM69 (Trim69) of Mus musculus (Mouse).